A 172-amino-acid polypeptide reads, in one-letter code: Fimbrial-like protein FimF (172 aa).

The signal sequence occupies residues 1-21; the sequence is MILRRVFIAIGCVLFSPLSQA. Residues Cys41 and Cys81 are joined by a disulfide bond.

Belongs to the fimbrial protein family.

Its subcellular location is the fimbrium. The polypeptide is Fimbrial-like protein FimF (fimF) (Salmonella typhimurium (strain LT2 / SGSC1412 / ATCC 700720)).